The chain runs to 459 residues: DNA primase large subunit (459 aa).

The [4Fe-4S] cluster site is built by C291, C369, C386, and C428.

The protein belongs to the eukaryotic-type primase large subunit family. Heterodimer of a catalytic subunit spp1/pri1 and a regulatory subunit spp2/pri2, also known as the DNA primase complex. Component of the alpha DNA polymerase complex (also known as the alpha DNA polymerase-primase complex) consisting of four subunits: the catalytic subunit pol1, the accessory subunit spb70/pol12, and the primase complex subunits spp1/pri1 and spp2/pri2 respectively. Interacts with orc2; preferentially associates with the unphosphorylated orc2 in G1 pre-Start prior to orc2 being phosphorylated by cdc2, the interaction is mediated by spb70 and might enable the association of the whole alpha DNA polymerase complex to orc2/spb70 complex on chromatin. [4Fe-4S] cluster serves as cofactor.

The protein localises to the nucleus. It localises to the chromosome. Its function is as follows. Regulatory subunit of the DNA primase complex and component of the DNA polymerase alpha complex (also known as the alpha DNA polymerase-primase complex - primosome/replisome) which play an essential role in the initiation of DNA synthesis. During the S phase of the cell cycle, the DNA polymerase alpha complex (composed of a catalytic subunit pol1, an accessory subunit spb70/pol12 and two primase subunits, the catalytic subunit spp1/pri1 and the regulatory subunit spp2/pri2) is recruited to DNA at the replicative forks. The primase subunit of the polymerase alpha complex initiates DNA synthesis by oligomerising short RNA primers on both leading and lagging strands. This chain is DNA primase large subunit, found in Schizosaccharomyces pombe (strain 972 / ATCC 24843) (Fission yeast).